The following is a 770-amino-acid chain: Cullin-1 (770 aa).

The 62-residue stretch at 700–761 (DRKLQIQAAI…EKEYLMRVEG (62 aa)) folds into the Cullin neddylation domain. A Glycyl lysine isopeptide (Lys-Gly) (interchain with G-Cter in NEDD8) cross-link involves residue K714.

Belongs to the cullin family. Part of a complex that includes culA, fbxA and regA. Formation of this complex is dependent on the MAP kinase erkB. In terms of processing, neddylated; which enhances the ubiquitination activity of SCF.

The protein operates within protein modification; protein ubiquitination. In terms of biological role, probable core component of cullin-based SCF-like E3 ubiquitin-protein ligase complexes which mediate the ubiquitination and subsequent proteasomal degradation of target proteins. The E3 ubiquitin-protein ligase activity of the complex is dependent on the neddylation of the cullin subunit. Required at several stages during development. CulA and fbxA regulate multicellular development by targeting regA for degradation via a pathway that requires erkB function, leading to an increase in cAMP and PKA activity. In Dictyostelium discoideum (Social amoeba), this protein is Cullin-1 (culA).